A 358-amino-acid polypeptide reads, in one-letter code: Alanine racemase (358 aa).

Catalysis depends on Lys-35, which acts as the Proton acceptor; specific for D-alanine. At Lys-35 the chain carries N6-(pyridoxal phosphate)lysine. Arg-130 provides a ligand contact to substrate. Tyr-255 serves as the catalytic Proton acceptor; specific for L-alanine. Substrate is bound at residue Met-303.

Belongs to the alanine racemase family. Requires pyridoxal 5'-phosphate as cofactor.

The catalysed reaction is L-alanine = D-alanine. It participates in amino-acid biosynthesis; D-alanine biosynthesis; D-alanine from L-alanine: step 1/1. In terms of biological role, catalyzes the interconversion of L-alanine and D-alanine. May also act on other amino acids. This chain is Alanine racemase (alr), found in Shewanella piezotolerans (strain WP3 / JCM 13877).